A 531-amino-acid polypeptide reads, in one-letter code: Maturase K (531 aa).

The protein belongs to the intron maturase 2 family. MatK subfamily.

The protein localises to the plastid. It is found in the chloroplast. Its function is as follows. Usually encoded in the trnK tRNA gene intron. Probably assists in splicing its own and other chloroplast group II introns. The chain is Maturase K from Ephedra sinica (Chinese ephedra).